We begin with the raw amino-acid sequence, 72 residues long: Translation initiation factor IF-1 (72 aa).

The S1-like domain occupies 1–72 (MAKEDCIEME…TKGRIKFRSK (72 aa)).

This sequence belongs to the IF-1 family. As to quaternary structure, component of the 30S ribosomal translation pre-initiation complex which assembles on the 30S ribosome in the order IF-2 and IF-3, IF-1 and N-formylmethionyl-tRNA(fMet); mRNA recruitment can occur at any time during PIC assembly.

The protein localises to the cytoplasm. Functionally, one of the essential components for the initiation of protein synthesis. Stabilizes the binding of IF-2 and IF-3 on the 30S subunit to which N-formylmethionyl-tRNA(fMet) subsequently binds. Helps modulate mRNA selection, yielding the 30S pre-initiation complex (PIC). Upon addition of the 50S ribosomal subunit IF-1, IF-2 and IF-3 are released leaving the mature 70S translation initiation complex. This chain is Translation initiation factor IF-1, found in Francisella tularensis subsp. tularensis (strain WY96-3418).